The chain runs to 671 residues: MASSSASATVAVDKATSDLLLGPDWTTNMEICDSVNSLHWQAKDVVKAVKKRLQHKSSRVQLLALTLLETLVKNCGDYLHHQVAEKNILGEMVKIVKKKADMQVRDKILVMVDSWQQAFGGPEGKYPQYYWAYDELRRSGVEFPRRSPDASPIITPPVSHPPLRQPQGGYGVPPAGYGVHQAGYGVPQAGYGIPQAGYGVPQAGYGIPQVGYGMPSGSSRRLDEAMATEVEGLSLSSIESMRDVMDLLGDMLQAVDPSDREAVKDEVIVDLVERCRSNQKKLMQMLTSTGDDELLGRGLDLNDSLQILLAKHDAIASGSPLPVQASGSPLSVQASKPADSSPKSSEAKDSSSIAGSSSPIPATVSTGKSPIDEEYEEEEDEFAQLARRHSKPPASVTTDPTSLESHNAASNALALALPDPPPPVNTTKEQDMIDLLSITLCTPSTPPAPSSQPSPPPPAGSDQNTHIYPQPQPRFDSYVAPWAQQQQPQQPQAQQGYSQHQQHQQQQGYSQPQHSQQQQGYSQLQQPQPQQGYSQSQPQAQVQMQPSTRPQNPYEYPPPPWASTSANAYYTPRANASASYTDTSALAGRSLQQSNSFPTRAGDPQATSTASNSGVSVGQKPFVPSYRLFEDLDVFGSADGKHNKPANSSNGSQNLSGSQTQQSMIGGRKMI.

Alanine 2 is subject to N-acetylalanine. One can recognise a VHS domain in the interval 15 to 144 (ATSDLLLGPD…ELRRSGVEFP (130 aa)). At serine 147 the chain carries Phosphoserine. The GAT domain occupies 229–317 (EVEGLSLSSI…LLAKHDAIAS (89 aa)). Disordered stretches follow at residues 320 to 620 (PLPV…VGQK) and 636 to 671 (GSAD…RKMI). Over residues 334-362 (ASKPADSSPKSSEAKDSSSIAGSSSPIPA) the composition is skewed to low complexity. Residues 372–382 (DEEYEEEEDEF) are compositionally biased toward acidic residues. Positions 395 to 405 (SVTTDPTSLES) are enriched in polar residues. Low complexity predominate over residues 407 to 417 (NAASNALALAL). The segment covering 444–459 (STPPAPSSQPSPPPPA) has biased composition (pro residues). A compositionally biased stretch (low complexity) spans 483-554 (AQQQQPQQPQ…QPSTRPQNPY (72 aa)). Polar residues-rich tracts occupy residues 562–598 (ASTS…NSFP) and 605–616 (QATSTASNSGVS). A Phosphoserine modification is found at serine 596. The segment covering 647–663 (NSSNGSQNLSGSQTQQS) has biased composition (low complexity).

The protein belongs to the TOM1 family. As to expression, ubiquitously expressed.

The protein resides in the endosome. Its subcellular location is the multivesicular body. It localises to the cytoplasm. It is found in the early endosome membrane. Functionally, acts as a gatekeeper for degradative protein sorting to the vacuole. Plays a role in recognition of ubiquitinated PIN2 auxin carrier at the plasma membrane and further to its endocytic sorting. Binds ubiquitin in vitro. Might contribute to the loading of the ESCRT machinery. The protein is TOM1-like protein 6 of Arabidopsis thaliana (Mouse-ear cress).